Reading from the N-terminus, the 212-residue chain is Cytidylate kinase (212 aa).

7 to 15 (GPAASGKGT) is an ATP binding site.

It belongs to the cytidylate kinase family. Type 1 subfamily.

Its subcellular location is the cytoplasm. It catalyses the reaction CMP + ATP = CDP + ADP. The enzyme catalyses dCMP + ATP = dCDP + ADP. The chain is Cytidylate kinase from Rhodopseudomonas palustris (strain ATCC BAA-98 / CGA009).